We begin with the raw amino-acid sequence, 454 residues long: UDP-N-acetylmuramate--L-alanine ligase (454 aa).

109–115 (GTHGKTT) is an ATP binding site.

This sequence belongs to the MurCDEF family.

The protein localises to the cytoplasm. It carries out the reaction UDP-N-acetyl-alpha-D-muramate + L-alanine + ATP = UDP-N-acetyl-alpha-D-muramoyl-L-alanine + ADP + phosphate + H(+). It participates in cell wall biogenesis; peptidoglycan biosynthesis. Functionally, cell wall formation. The sequence is that of UDP-N-acetylmuramate--L-alanine ligase from Protochlamydia amoebophila (strain UWE25).